A 379-amino-acid chain; its full sequence is Flagellin A (379 aa).

Coiled coils occupy residues 103–128 (TNSA…RIAE) and 302–341 (YVDS…IKDT).

It belongs to the bacterial flagellin family. In terms of assembly, heteromer of multiple flagellin subunits including FlaA, FlaB, FlaC, FlaD and possibly FlaE.

Its subcellular location is the secreted. The protein localises to the bacterial flagellum. Flagellin is the subunit protein which polymerizes to form the filaments of bacterial flagella. FlaA is essential for flagellar synthesis and full motility. Important for virulence at two different levels: is needed for crossing the fish integument and may play a role once the bacterium has entered the host. The chain is Flagellin A (flaA) from Vibrio anguillarum (Listonella anguillarum).